We begin with the raw amino-acid sequence, 129 residues long: MASRLLRGVGALAAQALRAHGPRGVAATRSMASGGGVPTDEEQATGLEREIMIAAQRGLDPYNMLPPKAASGTKEDPNLVPSVSNKRIVGCICEEDNCTVIWFWLHQGESQRCPNCGTHYKLVPYQMVH.

A mitochondrion-targeting transit peptide spans 1 to 31 (MASRLLRGVGALAAQALRAHGPRGVAATRSM). An N6-acetyllysine mark is found at Lys-68 and Lys-86. Residues Cys-91, Cys-93, Cys-113, and Cys-116 each coordinate Zn(2+). Lys-121 carries the post-translational modification N6-acetyllysine.

This sequence belongs to the cytochrome c oxidase subunit 5B family. In terms of assembly, component of the cytochrome c oxidase (complex IV, CIV), a multisubunit enzyme composed of 14 subunits. The complex is composed of a catalytic core of 3 subunits MT-CO1, MT-CO2 and MT-CO3, encoded in the mitochondrial DNA, and 11 supernumerary subunits COX4I, COX5A, COX5B, COX6A, COX6B, COX6C, COX7A, COX7B, COX7C, COX8 and NDUFA4, which are encoded in the nuclear genome. The complex exists as a monomer or a dimer and forms supercomplexes (SCs) in the inner mitochondrial membrane with NADH-ubiquinone oxidoreductase (complex I, CI) and ubiquinol-cytochrome c oxidoreductase (cytochrome b-c1 complex, complex III, CIII), resulting in different assemblies (supercomplex SCI(1)III(2)IV(1) and megacomplex MCI(2)III(2)IV(2)).

Its subcellular location is the mitochondrion inner membrane. Its pathway is energy metabolism; oxidative phosphorylation. In terms of biological role, component of the cytochrome c oxidase, the last enzyme in the mitochondrial electron transport chain which drives oxidative phosphorylation. The respiratory chain contains 3 multisubunit complexes succinate dehydrogenase (complex II, CII), ubiquinol-cytochrome c oxidoreductase (cytochrome b-c1 complex, complex III, CIII) and cytochrome c oxidase (complex IV, CIV), that cooperate to transfer electrons derived from NADH and succinate to molecular oxygen, creating an electrochemical gradient over the inner membrane that drives transmembrane transport and the ATP synthase. Cytochrome c oxidase is the component of the respiratory chain that catalyzes the reduction of oxygen to water. Electrons originating from reduced cytochrome c in the intermembrane space (IMS) are transferred via the dinuclear copper A center (CU(A)) of subunit 2 and heme A of subunit 1 to the active site in subunit 1, a binuclear center (BNC) formed by heme A3 and copper B (CU(B)). The BNC reduces molecular oxygen to 2 water molecules using 4 electrons from cytochrome c in the IMS and 4 protons from the mitochondrial matrix. This chain is Cytochrome c oxidase subunit 5B, mitochondrial (Cox5b), found in Rattus norvegicus (Rat).